Consider the following 480-residue polypeptide: Thyroid receptor-interacting protein 6 (480 aa).

Residues 1 to 12 (MSGPTWLPPKQP) show a composition bias toward pro residues. The tract at residues 1–43 (MSGPTWLPPKQPEPSRLPQGRSLPRGALGPPTAHGATLQPHPR) is disordered. The residue at position 25 (Arg25) is an Asymmetric dimethylarginine; alternate. Residue Arg25 is modified to Omega-N-methylarginine; alternate. The residue at position 55 (Tyr55) is a Phosphotyrosine; by SRC. A disordered region spans residues 57-84 (PPGVPEDRGPTWVGSHGTPQRLQGLPPD). A Phosphoserine modification is found at Ser92. The interval 107 to 134 (LDGGRSHAPRRPDRQAFEAPPPHAYRGG) is disordered. A compositionally biased stretch (basic and acidic residues) spans 108-122 (DGGRSHAPRRPDRQA). An omega-N-methylarginine mark is found at Arg111, Arg183, and Arg190. Position 193 is a phosphoserine (Ser193). 2 positions are modified to omega-N-methylarginine: Arg209 and Arg242. The disordered stretch occupies residues 218-257 (RSHREPGPGVPEGPSGVHIPAGGGRGGGHEPQGPLGQPPE). Gly residues predominate over residues 238 to 247 (AGGGRGGGHE). 3 consecutive LIM zinc-binding domains span residues 281 to 339 (GRCG…YVAT), 341 to 401 (EKCS…KFAP), and 404 to 471 (SVCG…RIQE). The interaction with MAGI1 and PTPN13 stretch occupies residues 473-480 (SATVTTDC).

It belongs to the zyxin/ajuba family. As to quaternary structure, specifically interacts with the ligand binding domain of the thyroid receptor (TR) in the presence of thyroid hormone. Interacts (via the third LIM domain and C-terminus) with PTPN13 (via the second PDZ domain). Interacts (via the second LIM domain or via the third LIM domain plus C-terminus) with PDLIM4 (via PDZ domain). Found in a complex with PTPN13 and PDLIM4. Interacts with SVIL isoform 2. Interacts with LPAR2 but not other LPA receptors. Interacts with PRKAA2. Interacts with MAGI1. Interacts with SCRIB. In case of infection, interacts with S.typhimurium protein sseI. Phosphorylation at Tyr-55 by SRC is required for enhancement of lysophosphatidic acid-induced cell migration. Tyr-55 is dephosphorylated by PTPN13. As to expression, highly expressed in kidney, stomach, lung, heart and testis. Low expression levels in brain, colon, thymus, pancreas and skin. Not expressed in skeletal muscle.

The protein localises to the cytoplasm. The protein resides in the cytoskeleton. It is found in the cell junction. Its subcellular location is the focal adhesion. It localises to the nucleus. Relays signals from the cell surface to the nucleus to weaken adherens junction and promote actin cytoskeleton reorganization and cell invasiveness. Involved in lysophosphatidic acid-induced cell adhesion and migration. Acts as a transcriptional coactivator for NF-kappa-B and JUN, and mediates the transrepression of these transcription factors induced by glucocorticoid receptor. In Mus musculus (Mouse), this protein is Thyroid receptor-interacting protein 6 (Trip6).